The sequence spans 316 residues: Protoheme IX farnesyltransferase (316 aa).

9 helical membrane passes run 34–54 (VMSLVVFTAFAGLVLAPGHIN), 55–75 (PFIGFTAILCIAIGAGASGAL), 95–115 (IPAGKILPQEALAFGLTLSAF), 118–138 (IILGLAVHWLAAGLLAFTIFF), 155–175 (IVIGGAAGAFPPMIGWACVTG), 182–202 (IVLFLIIFLWTPAHFWALALF), 228–250 (IVIYAVLTAVSGVCPTLLGFASL), 254–273 (AFATVMGLGFVWYSLGVLRM), and 287–307 (FAFSIAYLFAIFSALLVDYAI).

It belongs to the UbiA prenyltransferase family. Protoheme IX farnesyltransferase subfamily.

The protein resides in the cell inner membrane. It catalyses the reaction heme b + (2E,6E)-farnesyl diphosphate + H2O = Fe(II)-heme o + diphosphate. Its pathway is porphyrin-containing compound metabolism; heme O biosynthesis; heme O from protoheme: step 1/1. In terms of biological role, converts heme B (protoheme IX) to heme O by substitution of the vinyl group on carbon 2 of heme B porphyrin ring with a hydroxyethyl farnesyl side group. The polypeptide is Protoheme IX farnesyltransferase (Rhizobium meliloti (strain 1021) (Ensifer meliloti)).